We begin with the raw amino-acid sequence, 1165 residues long: Error-prone DNA polymerase (1165 aa).

Residues 1111-1165 are disordered; sequence SEGLARPPLPTGADLYEPLTYEPLNGDRRDNPDAPAQRLRHPRDVRILPPSRDFH. Positions 1152 to 1165 are enriched in basic and acidic residues; it reads PRDVRILPPSRDFH.

This sequence belongs to the DNA polymerase type-C family. DnaE2 subfamily.

It is found in the cytoplasm. It catalyses the reaction DNA(n) + a 2'-deoxyribonucleoside 5'-triphosphate = DNA(n+1) + diphosphate. In terms of biological role, DNA polymerase involved in damage-induced mutagenesis and translesion synthesis (TLS). It is not the major replicative DNA polymerase. The sequence is that of Error-prone DNA polymerase from Rhodopseudomonas palustris (strain HaA2).